A 75-amino-acid polypeptide reads, in one-letter code: UPF0291 protein lmo1304 (75 aa).

A disordered region spans residues 56–75 (DPNGKDVTPHKVKQLRKNKY). Positions 65–75 (HKVKQLRKNKY) are enriched in basic residues.

The protein belongs to the UPF0291 family.

The protein resides in the cytoplasm. The chain is UPF0291 protein lmo1304 from Listeria monocytogenes serovar 1/2a (strain ATCC BAA-679 / EGD-e).